The chain runs to 336 residues: Ornithine carbamoyltransferase, catabolic (336 aa).

Carbamoyl phosphate-binding positions include 57–60 (STRT), Gln84, Arg108, and 135–138 (HPTQ). L-ornithine-binding positions include Asn169, Asp233, and 237 to 238 (SM). Carbamoyl phosphate is bound by residues 275 to 276 (CL) and Arg322.

It belongs to the aspartate/ornithine carbamoyltransferase superfamily. OTCase family.

It localises to the cytoplasm. It carries out the reaction carbamoyl phosphate + L-ornithine = L-citrulline + phosphate + H(+). It functions in the pathway amino-acid degradation; L-arginine degradation via ADI pathway; carbamoyl phosphate from L-arginine: step 2/2. Reversibly catalyzes the transfer of the carbamoyl group from carbamoyl phosphate (CP) to the N(epsilon) atom of ornithine (ORN) to produce L-citrulline. The polypeptide is Ornithine carbamoyltransferase, catabolic (Photobacterium profundum (strain SS9)).